Reading from the N-terminus, the 698-residue chain is Elongation factor G 1 (698 aa).

The 283-residue stretch at 8–290 (ERYRNIGICA…AVVEFLPAPV (283 aa)) folds into the tr-type G domain. Residues 17–24 (AHVDAGKT), 88–92 (DTPGH), and 142–145 (NKMD) contribute to the GTP site.

The protein belongs to the TRAFAC class translation factor GTPase superfamily. Classic translation factor GTPase family. EF-G/EF-2 subfamily.

It localises to the cytoplasm. Catalyzes the GTP-dependent ribosomal translocation step during translation elongation. During this step, the ribosome changes from the pre-translocational (PRE) to the post-translocational (POST) state as the newly formed A-site-bound peptidyl-tRNA and P-site-bound deacylated tRNA move to the P and E sites, respectively. Catalyzes the coordinated movement of the two tRNA molecules, the mRNA and conformational changes in the ribosome. The sequence is that of Elongation factor G 1 from Shewanella sp. (strain MR-4).